Consider the following 493-residue polypeptide: Guanosine-5'-triphosphate,3'-diphosphate pyrophosphatase (493 aa).

This sequence belongs to the GppA/Ppx family. GppA subfamily.

It catalyses the reaction guanosine 3'-diphosphate 5'-triphosphate + H2O = guanosine 3',5'-bis(diphosphate) + phosphate + H(+). The protein operates within purine metabolism; ppGpp biosynthesis; ppGpp from GTP: step 2/2. Its function is as follows. Catalyzes the conversion of pppGpp to ppGpp. Guanosine pentaphosphate (pppGpp) is a cytoplasmic signaling molecule which together with ppGpp controls the 'stringent response', an adaptive process that allows bacteria to respond to amino acid starvation, resulting in the coordinated regulation of numerous cellular activities. The polypeptide is Guanosine-5'-triphosphate,3'-diphosphate pyrophosphatase (Salmonella dublin (strain CT_02021853)).